A 419-amino-acid chain; its full sequence is Metacaspase-1A (419 aa).

Residues 1–89 (MHHQQSSYGG…PPDQPVSFGQ (89 aa)) are disordered. A compositionally biased stretch (polar residues) spans 41-51 (NGYNSPQQNYG). A compositionally biased stretch (low complexity) spans 59–71 (YQQQSAYQNSYNQ). Catalysis depends on residues His190 and Cys246.

This sequence belongs to the peptidase C14B family.

In terms of biological role, involved in cell death (apoptosis). In Aspergillus oryzae (strain ATCC 42149 / RIB 40) (Yellow koji mold), this protein is Metacaspase-1A (casA).